The primary structure comprises 79 residues: DNA gyrase inhibitor YacG (79 aa).

The Zn(2+) site is built by Cys7, Cys10, Cys26, and Cys30.

This sequence belongs to the DNA gyrase inhibitor YacG family. Interacts with GyrB. The cofactor is Zn(2+).

In terms of biological role, inhibits all the catalytic activities of DNA gyrase by preventing its interaction with DNA. Acts by binding directly to the C-terminal domain of GyrB, which probably disrupts DNA binding by the gyrase. The chain is DNA gyrase inhibitor YacG from Shewanella pealeana (strain ATCC 700345 / ANG-SQ1).